Reading from the N-terminus, the 242-residue chain is Triosephosphate isomerase (242 aa).

8 to 10 (NWK) serves as a coordination point for substrate. His-98 serves as the catalytic Electrophile. Glu-167 functions as the Proton acceptor in the catalytic mechanism. Residues Gly-173, Ser-205, and 226–227 (GG) each bind substrate.

Belongs to the triosephosphate isomerase family. As to quaternary structure, homodimer.

It localises to the cytoplasm. The catalysed reaction is D-glyceraldehyde 3-phosphate = dihydroxyacetone phosphate. It participates in carbohydrate biosynthesis; gluconeogenesis. It functions in the pathway carbohydrate degradation; glycolysis; D-glyceraldehyde 3-phosphate from glycerone phosphate: step 1/1. Its function is as follows. Involved in the gluconeogenesis. Catalyzes stereospecifically the conversion of dihydroxyacetone phosphate (DHAP) to D-glyceraldehyde-3-phosphate (G3P). This chain is Triosephosphate isomerase, found in Mesomycoplasma hyopneumoniae (strain 232) (Mycoplasma hyopneumoniae).